Consider the following 103-residue polypeptide: Large ribosomal subunit protein bL21 (103 aa).

It belongs to the bacterial ribosomal protein bL21 family. As to quaternary structure, part of the 50S ribosomal subunit. Contacts protein L20.

This protein binds to 23S rRNA in the presence of protein L20. The sequence is that of Large ribosomal subunit protein bL21 from Aeromonas hydrophila subsp. hydrophila (strain ATCC 7966 / DSM 30187 / BCRC 13018 / CCUG 14551 / JCM 1027 / KCTC 2358 / NCIMB 9240 / NCTC 8049).